Here is a 566-residue protein sequence, read N- to C-terminus: Proline--tRNA ligase (566 aa).

It belongs to the class-II aminoacyl-tRNA synthetase family. ProS type 1 subfamily. As to quaternary structure, homodimer.

Its subcellular location is the cytoplasm. It carries out the reaction tRNA(Pro) + L-proline + ATP = L-prolyl-tRNA(Pro) + AMP + diphosphate. Functionally, catalyzes the attachment of proline to tRNA(Pro) in a two-step reaction: proline is first activated by ATP to form Pro-AMP and then transferred to the acceptor end of tRNA(Pro). As ProRS can inadvertently accommodate and process non-cognate amino acids such as alanine and cysteine, to avoid such errors it has two additional distinct editing activities against alanine. One activity is designated as 'pretransfer' editing and involves the tRNA(Pro)-independent hydrolysis of activated Ala-AMP. The other activity is designated 'posttransfer' editing and involves deacylation of mischarged Ala-tRNA(Pro). The misacylated Cys-tRNA(Pro) is not edited by ProRS. This Bacillus cereus (strain AH187) protein is Proline--tRNA ligase.